The primary structure comprises 126 residues: Glycine cleavage system H protein (126 aa).

The Lipoyl-binding domain maps to 24-106; the sequence is TVTVGITDHA…YGEGWMYRIK (83 aa). N6-lipoyllysine is present on Lys65.

The protein belongs to the GcvH family. As to quaternary structure, the glycine cleavage system is composed of four proteins: P, T, L and H. Requires (R)-lipoate as cofactor.

Its function is as follows. The glycine cleavage system catalyzes the degradation of glycine. The H protein shuttles the methylamine group of glycine from the P protein to the T protein. This is Glycine cleavage system H protein from Psychrobacter sp. (strain PRwf-1).